A 124-amino-acid chain; its full sequence is V-type proton ATPase subunit F 1 (124 aa).

This sequence belongs to the V-ATPase F subunit family. In terms of assembly, V-ATPase is a heteromultimeric enzyme made up of two complexes: the ATP-hydrolytic V1 complex and the proton translocation V0 complex. The V1 complex consists of three catalytic AB heterodimers that form a heterohexamer, three peripheral stalks each consisting of EG heterodimers, one central rotor including subunits D and F, and the regulatory subunits C and H. The proton translocation complex V0 consists of the proton transport subunit a, a ring of proteolipid subunits c9c'', rotary subunit d, subunits e and f, and the accessory subunits VhaAC45 and ATP6AP2.

Its function is as follows. Subunit of the V1 complex of vacuolar(H+)-ATPase (V-ATPase), a multisubunit enzyme composed of a peripheral complex (V1) that hydrolyzes ATP and a membrane integral complex (V0) that translocates protons. V-ATPase is responsible for acidifying and maintaining the pH of intracellular compartments and in some cell types, is targeted to the plasma membrane, where it is responsible for acidifying the extracellular environment. The protein is V-type proton ATPase subunit F 1 (Vha14) of Drosophila pseudoobscura pseudoobscura (Fruit fly).